Here is a 103-residue protein sequence, read N- to C-terminus: Regulator of rDNA transcription protein 1 (103 aa).

The next 2 helical transmembrane spans lie at 9-33 and 40-57; these read FLPSILIGYISIRVSLLVWVNWVLV and VAFIFSLWYFILSIYTFF.

It is found in the membrane. Its function is as follows. Identified in a screen for mutants with decreased levels of rDNA transcription. The protein is Regulator of rDNA transcription protein 1 (RRT1) of Saccharomyces cerevisiae (strain ATCC 204508 / S288c) (Baker's yeast).